The primary structure comprises 551 residues: MTKLVTWHIKNAKILDVFNLKFDDTELWINDNQILYRGKRSDLTAENTFDAGGGYIVPGLIDSHLHIESSLLTPSEFGKLVIPHGITRIFADPHEIASVAGVSGIQYMLEDAKQTPLNIHYMLPSSVPATPFEHAGATLHADALKPFYSVPEVNGLAEVMDFPAVANLDPDMLQKIKDAEDAGRHVDGHAAGLTPEQLAVYRNVGIDTDHESENAKEALERLNAGFSIFVREGTVERDEKAILPAITMANQSHFSFATDDKTANDIQSEGSIDYSVKLAIENGMDPAIAFTIATYNAAQAHKLQNIGALTDGFVADLAVFDDLAHLETPKVMIGGHWYKDNQSIVTPLANQSLNFSLTKSDIALPLQSDKPAHIINITPHHITTEHTVEEVPVEQGLFVANETFAKIVVAERYHNLGHGVGIIKGFNMRDGAIASTIAHDSHNVIIAGVNDDDMILAADTLHEIGGGQVVVNHGKITTLPLPIGGLMSDQPFENVIKTNQQLLQAFSEISDVPFDPFLTLSFMALPVIPSLKITDQGLFDFEKFDFITVQD.

This sequence belongs to the metallo-dependent hydrolases superfamily. Adenine deaminase family. Mn(2+) serves as cofactor.

It carries out the reaction adenine + H2O + H(+) = hypoxanthine + NH4(+). The sequence is that of Adenine deaminase from Leuconostoc mesenteroides subsp. mesenteroides (strain ATCC 8293 / DSM 20343 / BCRC 11652 / CCM 1803 / JCM 6124 / NCDO 523 / NBRC 100496 / NCIMB 8023 / NCTC 12954 / NRRL B-1118 / 37Y).